The primary structure comprises 240 residues: 7-cyano-7-deazaguanine synthase (240 aa).

9–19 provides a ligand contact to ATP; it reads FSGGLDSTACL. Positions 195, 210, 213, and 216 each coordinate Zn(2+).

Belongs to the QueC family. Zn(2+) is required as a cofactor.

It catalyses the reaction 7-carboxy-7-deazaguanine + NH4(+) + ATP = 7-cyano-7-deazaguanine + ADP + phosphate + H2O + H(+). Its pathway is purine metabolism; 7-cyano-7-deazaguanine biosynthesis. Its function is as follows. Catalyzes the ATP-dependent conversion of 7-carboxy-7-deazaguanine (CDG) to 7-cyano-7-deazaguanine (preQ(0)). This chain is 7-cyano-7-deazaguanine synthase, found in Pyrococcus furiosus (strain ATCC 43587 / DSM 3638 / JCM 8422 / Vc1).